Reading from the N-terminus, the 334-residue chain is Trans-O-hydroxybenzylidenepyruvate hydratase-aldolase (334 aa).

The protein belongs to the DapA family.

It catalyses the reaction (3E)-4-(2-hydroxyphenyl)-2-oxobut-3-enoate + H2O = salicylaldehyde + pyruvate. It participates in aromatic compound metabolism; naphthalene degradation. In terms of biological role, involved in the naphthalene upper catabolic pathway. Catalyzes the transformation of trans-O-hydroxybenzylidenepyruvate (THBPA) to salicylaldehyde and pyruvate. The reaction is reversible. The sequence is that of Trans-O-hydroxybenzylidenepyruvate hydratase-aldolase (pahE) from Pseudomonas aeruginosa.